The sequence spans 114 residues: UPF0145 protein Acry_1752 (114 aa).

This sequence belongs to the UPF0145 family.

This is UPF0145 protein Acry_1752 from Acidiphilium cryptum (strain JF-5).